The chain runs to 248 residues: Probable transcriptional regulatory protein PP_1214 (248 aa).

Positions 1–21 (MAGHSKWANIKHRKERQDAKR) are disordered.

Belongs to the TACO1 family.

It is found in the cytoplasm. The chain is Probable transcriptional regulatory protein PP_1214 from Pseudomonas putida (strain ATCC 47054 / DSM 6125 / CFBP 8728 / NCIMB 11950 / KT2440).